The following is a 209-amino-acid chain: Small ribosomal subunit protein uS3 (209 aa).

The KH type-2 domain maps to 38–107 (IRKFIKNKYY…RVVINIEEIK (70 aa)).

It belongs to the universal ribosomal protein uS3 family. As to quaternary structure, part of the 30S ribosomal subunit. Forms a tight complex with proteins S10 and S14.

In terms of biological role, binds the lower part of the 30S subunit head. Binds mRNA in the 70S ribosome, positioning it for translation. The protein is Small ribosomal subunit protein uS3 of Thermotoga sp. (strain RQ2).